Here is a 394-residue protein sequence, read N- to C-terminus: Acetate kinase 1 (394 aa).

Asn-8 contacts Mg(2+). Residue Lys-15 coordinates ATP. Arg-90 contacts substrate. Asp-147 (proton donor/acceptor) is an active-site residue. ATP contacts are provided by residues 207-211 (HLGSG) and 282-284 (DMR). Glu-382 is a binding site for Mg(2+).

It belongs to the acetokinase family. Homodimer. It depends on Mg(2+) as a cofactor. The cofactor is Mn(2+).

It is found in the cytoplasm. It carries out the reaction acetate + ATP = acetyl phosphate + ADP. It functions in the pathway metabolic intermediate biosynthesis; acetyl-CoA biosynthesis; acetyl-CoA from acetate: step 1/2. Catalyzes the formation of acetyl phosphate from acetate and ATP. Can also catalyze the reverse reaction. This chain is Acetate kinase 1, found in Latilactobacillus sakei subsp. sakei (strain 23K) (Lactobacillus sakei subsp. sakei).